We begin with the raw amino-acid sequence, 223 residues long: Holliday junction branch migration complex subunit RuvA (223 aa).

A domain I region spans residues 1–64 (MIGKLTGRLD…EDLLQLFGFL (64 aa)). Residues 65–143 (SPYEKEWHRL…AVMAMGGTLD (79 aa)) are domain II. The interval 144–171 (DAMDDVVDDMPGESAAPAPAPQPRAPKR) is flexible linker. The tract at residues 148 to 177 (DVVDDMPGESAAPAPAPQPRAPKRPASNAQ) is disordered. The tract at residues 172–223 (PASNAQAEALSALQNLGYGPSDAAQAVAQAAESASNTPELIRAALRLLAPKE) is domain III.

It belongs to the RuvA family. Homotetramer. Forms an RuvA(8)-RuvB(12)-Holliday junction (HJ) complex. HJ DNA is sandwiched between 2 RuvA tetramers; dsDNA enters through RuvA and exits via RuvB. An RuvB hexamer assembles on each DNA strand where it exits the tetramer. Each RuvB hexamer is contacted by two RuvA subunits (via domain III) on 2 adjacent RuvB subunits; this complex drives branch migration. In the full resolvosome a probable DNA-RuvA(4)-RuvB(12)-RuvC(2) complex forms which resolves the HJ.

Its subcellular location is the cytoplasm. The RuvA-RuvB-RuvC complex processes Holliday junction (HJ) DNA during genetic recombination and DNA repair, while the RuvA-RuvB complex plays an important role in the rescue of blocked DNA replication forks via replication fork reversal (RFR). RuvA specifically binds to HJ cruciform DNA, conferring on it an open structure. The RuvB hexamer acts as an ATP-dependent pump, pulling dsDNA into and through the RuvAB complex. HJ branch migration allows RuvC to scan DNA until it finds its consensus sequence, where it cleaves and resolves the cruciform DNA. The polypeptide is Holliday junction branch migration complex subunit RuvA (Jannaschia sp. (strain CCS1)).